The chain runs to 146 residues: Inner membrane protein YdgK (146 aa).

Over 1–12 (MTTTTPQRIGGW) the chain is Cytoplasmic. The chain crosses the membrane as a helical span at residues 13-33 (LLGPLAWLLVALLSTTLALLL). The Periplasmic portion of the chain corresponds to 34 to 59 (YTAALSSPQTFQTLGGQALTTQILWG). Residues 60–80 (VSFITAIALWYYTLWLTIAFF) form a helical membrane-spanning segment. Topologically, residues 81–89 (KRRRCVPKH) are cytoplasmic. The helical transmembrane segment at 90-110 (YIIWLLISVLLAVKAFAFSPV) threads the bilayer. Topologically, residues 111–112 (ED) are periplasmic. The chain crosses the membrane as a helical span at residues 113 to 133 (GIAVRQLLFTLLATALIVPYF). Residues 134-146 (KRSSRVKATFVNP) lie on the Cytoplasmic side of the membrane.

The protein to Synechocystis PCC 6803 sll0481.

It is found in the cell inner membrane. The protein is Inner membrane protein YdgK (ydgK) of Escherichia coli (strain K12).